A 103-amino-acid polypeptide reads, in one-letter code: Small ribosomal subunit protein uS10 (103 aa).

Belongs to the universal ribosomal protein uS10 family. In terms of assembly, part of the 30S ribosomal subunit.

In terms of biological role, involved in the binding of tRNA to the ribosomes. In Marinomonas sp. (strain MWYL1), this protein is Small ribosomal subunit protein uS10.